The sequence spans 170 residues: Protein-lysine myristoyltransferase HlyC (170 aa).

Active-site residues include H23 and D92. Position 151 (H151) interacts with heme.

This sequence belongs to the RTX toxin acyltransferase family. As to quaternary structure, monomer. Proteolytically cleaved by the protease systems ClpAP, ClpXP and FtsH, leading to its degradation.

It localises to the cytoplasm. The catalysed reaction is tetradecanoyl-[ACP] + L-lysyl-[protein] = N(6)-tetradecanoyl-L-lysyl-[protein] + holo-[ACP] + H(+). The acyltransferase activity is inhibited by heme. In terms of biological role, protein-lysine myristoyltransferase that catalyzes myristoylation of the protoxin (HlyA) at two internal lysine residues, thereby converting it to the active toxin. The chain is Protein-lysine myristoyltransferase HlyC from Escherichia coli.